Consider the following 1784-residue polypeptide: Histone acetyltransferase KAT6B (1784 aa).

In terms of domain architecture, SAMD1-like winged helix (WH) spans 1–77 (MVKLANPLYT…LASYKDPDNP (77 aa)). The tract at residues 72–98 (KDPDNPGRFSSVKPGTFPKSTKESRGS) is disordered. Residues 103–176 (RNVDWNKLLR…KDGPQYRVNY (74 aa)) enclose the H15 domain. PHD-type zinc fingers lie at residues 213–272 (IPIC…CKTC) and 269–320 (CKTC…CRPK). At Ser-355 the chain carries Phosphoserine. The negatively regulates HAT activity stretch occupies residues 361-425 (GSMNAFTGRG…ECESGVEDCG (65 aa)). Residue Lys-381 forms a Glycyl lysine isopeptide (Lys-Gly) (interchain with G-Cter in SUMO2) linkage. The 275-residue stretch at 423–697 (DCGRYPSVIE…LDPDSLRWTP (275 aa)) folds into the MYST-type HAT domain. Positions 426 to 716 (RYPSVIEFGK…EEEREAEKEA (291 aa)) are catalytic. The C2HC MYST-type zinc-finger motif lies at 456 to 481 (LYLCEFCLKYMKSKNILLRHSKKCGW). The interaction with BRPF1 stretch occupies residues 460–716 (EFCLKYMKSK…EEEREAEKEA (257 aa)). N6-acetyllysine; by autocatalysis is present on Lys-523. Residues 564 to 568 (SCIMI) and 573 to 579 (QRQGFGR) each bind acetyl-CoA. The Proton donor/acceptor role is filled by Glu-599. Ser-603 lines the acetyl-CoA pocket. Disordered regions lie at residues 730-884 (EQEV…RPMP), 904-1163 (RKAF…FKEV), 1195-1273 (SCNS…FQDC), and 1291-1330 (QSPQ…SPSV). A compositionally biased stretch (polar residues) spans 733–751 (VLSTRANSRQSPAKVQSKN). An N6-acetyllysine mark is found at Lys-746, Lys-750, and Lys-752. The residue at position 756 (Ser-756) is a Phosphoserine. Acidic residues predominate over residues 777-819 (SEEEEEEEEDEEEEDEEEEEEEEEDEEEEEEEEEEEEEEEEEN). The span at 820-831 (IQSSPPRLTKPQ) shows a compositional bias: polar residues. The span at 835–854 (IKRKRPFVLKKKRGRKRRRI) shows a compositional bias: basic residues. A compositionally biased stretch (low complexity) spans 856 to 869 (SSVTTETISETTEV). Basic residues predominate over residues 904 to 914 (RKAFQHQPGKK). Basic and acidic residues-rich tracts occupy residues 938–957 (MNDD…EPLK) and 1055–1064 (EKPEDDLIKP). Acidic residues predominate over residues 1065 to 1087 (EEEEEEEEEEEEEEGEEEEEEGG). 2 stretches are compositionally biased toward basic and acidic residues: residues 1088-1101 (NVEK…SQEK) and 1107-1118 (SPEKEDSARLDD). A compositionally biased stretch (acidic residues) spans 1119–1128 (HEEEEEEDEE). Residues 1144 to 1163 (HMESAEVEKEELPRESFKEV) are compositionally biased toward basic and acidic residues. The segment covering 1209-1218 (AVPESDEEPP) has biased composition (acidic residues). Over residues 1224-1240 (QKQDQKNSKEVDTEFKE) the composition is skewed to basic and acidic residues. 2 stretches are compositionally biased toward polar residues: residues 1251 to 1263 (ETVQ…TQES) and 1291 to 1302 (QSPQIATTLDDC). An interaction with RUNX1 and RUNX2 region spans residues 1271-1784 (QDCAETQEAC…QSLNGSYMRR (514 aa)). Positions 1305-1322 (SDHSSPVSSVHSHPGQSV) are enriched in low complexity.

It belongs to the MYST (SAS/MOZ) family. In terms of assembly, component of the MOZ/MORF complex composed at least of ING5, KAT6A, KAT6B, MEAF6 and one of BRPF1, BRD1/BRPF2 and BRPF3. Interacts with RUNX1 and RUNX2. In terms of processing, autoacetylation at Lys-523 is required for proper function.

It localises to the nucleus. It carries out the reaction L-lysyl-[protein] + acetyl-CoA = N(6)-acetyl-L-lysyl-[protein] + CoA + H(+). Functionally, histone acetyltransferase which may be involved in both positive and negative regulation of transcription. Required for RUNX2-dependent transcriptional activation. May be involved in cerebral cortex development. Component of the MOZ/MORF complex which has a histone H3 acetyltransferase activity. The sequence is that of Histone acetyltransferase KAT6B (KAT6B) from Macaca fascicularis (Crab-eating macaque).